The primary structure comprises 285 residues: Ribosomal protein L11 methyltransferase (285 aa).

Thr131, Gly154, Asp176, and Asn223 together coordinate S-adenosyl-L-methionine.

This sequence belongs to the methyltransferase superfamily. PrmA family.

Its subcellular location is the cytoplasm. It carries out the reaction L-lysyl-[protein] + 3 S-adenosyl-L-methionine = N(6),N(6),N(6)-trimethyl-L-lysyl-[protein] + 3 S-adenosyl-L-homocysteine + 3 H(+). Functionally, methylates ribosomal protein L11. This chain is Ribosomal protein L11 methyltransferase, found in Brucella melitensis biotype 2 (strain ATCC 23457).